A 78-amino-acid chain; its full sequence is Putative DNA-binding protein MT0521 (78 aa).

The segment at residues 24–45 (LLTVAEVAALMRVSKMTVYRLV) is a DNA-binding region (H-T-H motif).

In Mycobacterium tuberculosis (strain CDC 1551 / Oshkosh), this protein is Putative DNA-binding protein MT0521.